The sequence spans 156 residues: Ribosomal RNA large subunit methyltransferase H (156 aa).

S-adenosyl-L-methionine-binding positions include leucine 73, glycine 104, and 123–128; that span reads LSPLTL.

This sequence belongs to the RNA methyltransferase RlmH family. In terms of assembly, homodimer.

The protein resides in the cytoplasm. It carries out the reaction pseudouridine(1915) in 23S rRNA + S-adenosyl-L-methionine = N(3)-methylpseudouridine(1915) in 23S rRNA + S-adenosyl-L-homocysteine + H(+). Its function is as follows. Specifically methylates the pseudouridine at position 1915 (m3Psi1915) in 23S rRNA. The chain is Ribosomal RNA large subunit methyltransferase H from Sodalis glossinidius (strain morsitans).